Here is a 451-residue protein sequence, read N- to C-terminus: 3-phosphoshikimate 1-carboxyvinyltransferase (451 aa).

3-phosphoshikimate contacts are provided by K30, S31, and R35. K30 is a binding site for phosphoenolpyruvate. Phosphoenolpyruvate is bound by residues G101 and R130. 5 residues coordinate 3-phosphoshikimate: S176, S177, Q178, D321, and K348. Residue Q178 participates in phosphoenolpyruvate binding. D321 acts as the Proton acceptor in catalysis. Residues R352 and Q422 each contribute to the phosphoenolpyruvate site.

This sequence belongs to the EPSP synthase family. As to quaternary structure, monomer.

It localises to the cytoplasm. It carries out the reaction 3-phosphoshikimate + phosphoenolpyruvate = 5-O-(1-carboxyvinyl)-3-phosphoshikimate + phosphate. The protein operates within metabolic intermediate biosynthesis; chorismate biosynthesis; chorismate from D-erythrose 4-phosphate and phosphoenolpyruvate: step 6/7. Catalyzes the transfer of the enolpyruvyl moiety of phosphoenolpyruvate (PEP) to the 5-hydroxyl of shikimate-3-phosphate (S3P) to produce enolpyruvyl shikimate-3-phosphate and inorganic phosphate. The chain is 3-phosphoshikimate 1-carboxyvinyltransferase from Burkholderia pseudomallei (strain K96243).